The chain runs to 409 residues: Translation initiation factor 2 subunit gamma (409 aa).

Positions 7–203 (QPEVNIGLVG…AIEREIPTPE (197 aa)) constitute a tr-type G domain. Residues 16–23 (GHVDHGKT) are G1. The Mg(2+) site is built by aspartate 19, threonine 23, glycine 44, and serine 46. 19–24 (DHGKTT) serves as a coordination point for GTP. The segment at 44–48 (GISIR) is G2. A G3 region spans residues 90 to 93 (DAPG). GTP is bound by residues 146-149 (NKID) and 181-183 (SAQ). The tract at residues 146–149 (NKID) is G4. Residues 181–183 (SAQ) form a G5 region.

It belongs to the TRAFAC class translation factor GTPase superfamily. Classic translation factor GTPase family. EIF2G subfamily. In terms of assembly, heterotrimer composed of an alpha, a beta and a gamma chain. The cofactor is Mg(2+).

It carries out the reaction GTP + H2O = GDP + phosphate + H(+). Its function is as follows. eIF-2 functions in the early steps of protein synthesis by forming a ternary complex with GTP and initiator tRNA. The protein is Translation initiation factor 2 subunit gamma of Haloquadratum walsbyi (strain DSM 16790 / HBSQ001).